Here is a 184-residue protein sequence, read N- to C-terminus: MSWRSESIWIEFITGSRKTSNFCWAFILFLGSLGFLLVGTSSYLGRNFISLFASQQIIFFPQGIVMSFYGIAGLFISCYLWCTILWNVGSGYDLFDRKEGIVRIFRWGFPGKSRRIFLRFLMKDIQSIRIEVKEGVSARRVLYMEIRGQGAIPLIRTDENFTTREIEQKAAELAYFLRVPIEVF.

Transmembrane regions (helical) follow at residues 22-42 (FCWA…GTSS) and 57-77 (IIFF…LFIS).

Belongs to the Ycf4 family.

The protein localises to the plastid. It is found in the chloroplast thylakoid membrane. Its function is as follows. Seems to be required for the assembly of the photosystem I complex. The chain is Photosystem I assembly protein Ycf4 from Draba nemorosa (Woodland whitlowgrass).